A 359-amino-acid chain; its full sequence is Histidinol-phosphate aminotransferase (359 aa).

Lys-212 carries the post-translational modification N6-(pyridoxal phosphate)lysine.

It belongs to the class-II pyridoxal-phosphate-dependent aminotransferase family. Histidinol-phosphate aminotransferase subfamily. In terms of assembly, homodimer. Requires pyridoxal 5'-phosphate as cofactor.

The catalysed reaction is L-histidinol phosphate + 2-oxoglutarate = 3-(imidazol-4-yl)-2-oxopropyl phosphate + L-glutamate. It participates in amino-acid biosynthesis; L-histidine biosynthesis; L-histidine from 5-phospho-alpha-D-ribose 1-diphosphate: step 7/9. The protein is Histidinol-phosphate aminotransferase of Buchnera aphidicola subsp. Schlechtendalia chinensis.